The following is a 424-amino-acid chain: Dihydroorotase (424 aa).

Residues His-58 and His-60 each contribute to the Zn(2+) site. Substrate contacts are provided by residues 60–62 (HLR), Asn-92, and Asn-276. Residue Asp-303 participates in Zn(2+) binding. The active site involves Asp-303. Substrate-binding positions include His-307 and 321-322 (FG).

The protein belongs to the metallo-dependent hydrolases superfamily. DHOase family. Class I DHOase subfamily. Zn(2+) is required as a cofactor.

It catalyses the reaction (S)-dihydroorotate + H2O = N-carbamoyl-L-aspartate + H(+). Its pathway is pyrimidine metabolism; UMP biosynthesis via de novo pathway; (S)-dihydroorotate from bicarbonate: step 3/3. Its function is as follows. Catalyzes the reversible cyclization of carbamoyl aspartate to dihydroorotate. The chain is Dihydroorotase from Staphylococcus aureus (strain COL).